The chain runs to 135 residues: Interleukin-4 (135 aa).

Positions methionine 1–glycine 24 are cleaved as a signal peptide. 3 cysteine pairs are disulfide-bonded: cysteine 27–cysteine 135, cysteine 48–cysteine 85, and cysteine 70–cysteine 105. N-linked (GlcNAc...) asparagine glycans are attached at residues asparagine 62 and asparagine 96.

It belongs to the IL-4/IL-13 family.

Its subcellular location is the secreted. Functionally, participates in at least several B-cell activation processes as well as of other cell types. It is a costimulator of DNA-synthesis. It induces the expression of class II MHC molecules on resting B-cells. It enhances both secretion and cell surface expression of IgE and IgG1. It also regulates the expression of the low affinity Fc receptor for IgE (CD23) on both lymphocytes and monocytes. Positively regulates IL31RA expression in macrophages. Stimulates autophagy in dendritic cells by interfering with mTORC1 signaling and through the induction of RUFY4. The sequence is that of Interleukin-4 (IL4) from Cervus elaphus (Red deer).